The primary structure comprises 318 residues: Ubiquitin-conjugating enzyme E2 J1 (318 aa).

Residues 1–282 (METRYNLKSP…QGHQPRDNHT (282 aa)) are Cytoplasmic-facing. A UBC core domain is found at 10-160 (PAVKRLMKEA…GCGSAMKDVL (151 aa)). The active-site Glycyl thioester intermediate is the Cys-91. At Ser-184 the chain carries Phosphoserine; by MAPKAPK2. The span at 229 to 248 (LQNSSAASFHQPTQPVAKNT) shows a compositional bias: polar residues. The disordered stretch occupies residues 229-283 (LQNSSAASFHQPTQPVAKNTSMSPRQRRAQQQSQRRLSTSPDVIQGHQPRDNHTD). The segment covering 249-268 (SMSPRQRRAQQQSQRRLSTS) has biased composition (low complexity). Phosphoserine is present on residues Ser-266 and Ser-268. Residues 283–303 (DHGGSAVLIVILTLALAALIF) traverse the membrane as a helical; Anchor for type IV membrane protein segment. Residues 304-318 (RRIYLANEYIFDFEL) lie on the Lumenal side of the membrane.

It belongs to the ubiquitin-conjugating enzyme family. In terms of assembly, component of the HRD1 complex, which comprises at least SYNV1/HRD1, DERL1/2, FAM8A1, HERPUD1/HERP, OS9, SEL1L and UBE2J1. Interacts with E3 ligase RNF26. Interacts with E3 ligase RNF133. Post-translationally, phosphorylated at Ser-184 in a cytosolic stress-dependent manner by MAP kinase p38 MAPKAPK2. In terms of processing, phosphorylated UBE2J1 is rapidly ubiquitinated and subsequently degraded by the proteasome. In terms of tissue distribution, expressed in testes.

It localises to the endoplasmic reticulum membrane. The catalysed reaction is S-ubiquitinyl-[E1 ubiquitin-activating enzyme]-L-cysteine + [E2 ubiquitin-conjugating enzyme]-L-cysteine = [E1 ubiquitin-activating enzyme]-L-cysteine + S-ubiquitinyl-[E2 ubiquitin-conjugating enzyme]-L-cysteine.. Its pathway is protein modification; protein ubiquitination. Catalyzes the covalent attachment of ubiquitin to other proteins. Functions in the selective degradation of misfolded membrane proteins from the endoplasmic reticulum (ERAD) and is essential for cells to recover from ER stress. Plays a role in MAPKAPK2-dependent translational control of TNF-alpha synthesis. Also acts as a platform for perinuclear positioning of the endosomal system by mediating ubiquitination of SQSTM1 through interaction with the E3 ubiquitin-protein ligase RNF26. Plays a role in male fecundity through the interaction with the E3 ubiquitin-protein ligase RNF133. In terms of biological role, (Microbial infection) Promotes Dengue virus RNA replication by negatively regulating IFN-beta signaling and mediating 'Lys-48'-linked ubiquitination on IRF3. The protein is Ubiquitin-conjugating enzyme E2 J1 of Homo sapiens (Human).